A 620-amino-acid chain; its full sequence is Glutathione-regulated potassium-efflux system protein KefC (620 aa).

The Periplasmic segment spans residues 1–3 (MDS). Residues 4-24 (HTLLQALIYLGSAALIVPIAV) traverse the membrane as a helical segment. A topological domain (cytoplasmic) is located at residue R25. A helical transmembrane segment spans residues 26–46 (LGLGSVLGYLIAGCIIGPWGL). Topologically, residues 47–53 (RLVTDAE) are periplasmic. A helical membrane pass occupies residues 54–74 (SILHFAEIGVVLMLFVIGLEL). Topologically, residues 75-89 (DPQRLWKLRASVFGG) are cytoplasmic. A helical membrane pass occupies residues 90–110 (GALQMGVCGGLIGLFCMFLGL). Over 111 to 113 (RWQ) the chain is Periplasmic. The chain crosses the membrane as a helical span at residues 114–134 (VAELIGMTLALSSTAIAMQAM). The Cytoplasmic segment spans residues 135–148 (NERNLTVSQVGRSA). Residues 149–169 (FAVLLFQDIAAIPLVAMIPLL) traverse the membrane as a helical segment. The Periplasmic portion of the chain corresponds to 170–177 (AASGASTT). A helical membrane pass occupies residues 178-198 (LGAFALSALKVAGALALVVLL). Residues 199-213 (GRYVTRPALRFVARS) are Cytoplasmic-facing. Residues 214-233 (GLREVFSAVALFLVFGFGLL) traverse the membrane as a helical segment. Over 234 to 236 (LEE) the chain is Periplasmic. The helical transmembrane segment at 237–254 (VGLSMAMGAFLAGVLLAS) threads the bilayer. At 255–269 (SEYRHALESDIEPFK) the chain is on the cytoplasmic side. A helical transmembrane segment spans residues 270–290 (GLLLGLFFIGVGMSIDFGTLV). The Periplasmic segment spans residues 291–293 (ENP). Residues 294–314 (LRILLLLAGFLAIKIVMLWLV) traverse the membrane as a helical segment. Residues 315–326 (ARPLGVPAKQRR) are Cytoplasmic-facing. Residues 327-347 (WFAVLLGQGSEFAFVVFGAAQ) traverse the membrane as a helical segment. Residues 348–358 (MADVLEPEWAK) lie on the Periplasmic side of the membrane. The helical transmembrane segment at 359 to 379 (ALTLAVALSMAATPIFLVLLT) threads the bilayer. Topologically, residues 380–620 (RMEKTATGEA…ADEPEVKPSI (241 aa)) are cytoplasmic. Positions 399–518 (QPRVIVAGFG…AGVAMPERET (120 aa)) constitute an RCK N-terminal domain. A disordered region spans residues 599–620 (QGTAEGKHSGEVADEPEVKPSI).

Belongs to the monovalent cation:proton antiporter 2 (CPA2) transporter (TC 2.A.37) family. KefC subfamily. As to quaternary structure, homodimer. Interacts with the regulatory subunit KefF.

The protein localises to the cell inner membrane. Functionally, pore-forming subunit of a potassium efflux system that confers protection against electrophiles. Catalyzes K(+)/H(+) antiport. This Salmonella typhimurium (strain LT2 / SGSC1412 / ATCC 700720) protein is Glutathione-regulated potassium-efflux system protein KefC.